The following is a 1509-amino-acid chain: ABC transporter G family member 38 (1509 aa).

One can recognise an ABC transporter 1 domain in the interval 196–467 (LGLVGLNFAK…FERCGFRCPE (272 aa)). 229–236 (GPPSSGKT) serves as a coordination point for ATP. Residues 545–758 (ELLKTSCSKE…AYIAFSSNEM (214 aa)) enclose the ABC transmembrane type-2 1 domain. Helical transmembrane passes span 563–583 (FVYIFKTVQGILVALIASTVF), 598–618 (IYIGALIFVMITNMFSGFADL), 651–671 (IPSSLFESIIWVAITYYTMGF), 682–702 (LLVVFMLQQMAAGLFRVTAGL), 707–727 (VVTNTAGSLAVLIMFVLGGFI), 733–753 (IPKWWVWAYWCSPLTYAYIAF), and 791–811 (YWIATGALLGFTILFNVLFSL). Residues 908–1160 (MSFNEINYYV…KVVEYFEAIP (253 aa)) enclose the ABC transporter 2 domain. 953–960 (GVSGAGKT) provides a ligand contact to ATP. Positions 1233-1447 (NQFKLCLWKQ…TVYGLIVSQY (215 aa)) constitute an ABC transmembrane type-2 2 domain. Helical transmembrane passes span 1252–1272 (YNLVRIFFALFTALMLGTIFW), 1284–1304 (LLVIIGSMYAAVLFVGFENSV), 1336–1356 (VVVEIPYVFVETVIYTLIVYP), 1367–1387 (FFWFFYVSFFTFLYFTYYGMM), 1397–1417 (VASILGAAFYTLFNLFSGFFI), 1425–1445 (WWVWYYWLCPVAWTVYGLIVS), and 1478–1498 (FMGVVAAVLAGFTVFFAFTYA).

Belongs to the ABC transporter superfamily. ABCG family. PDR (TC 3.A.1.205) subfamily.

It is found in the membrane. May be a general defense protein. This chain is ABC transporter G family member 38, found in Oryza sativa subsp. japonica (Rice).